A 63-amino-acid polypeptide reads, in one-letter code: Small ribosomal subunit protein eS31 (63 aa).

Cys-31, Cys-34, Cys-50, and Cys-53 together coordinate Zn(2+). A C4-type zinc finger spans residues 31 to 53 (CPRCGSIMAHHMKPVERWACGKC).

It belongs to the eukaryotic ribosomal protein eS31 family. Part of the 30S ribosomal subunit. It depends on Zn(2+) as a cofactor.

This is Small ribosomal subunit protein eS31 from Sulfurisphaera tokodaii (strain DSM 16993 / JCM 10545 / NBRC 100140 / 7) (Sulfolobus tokodaii).